The following is a 104-amino-acid chain: Pterin-4-alpha-carbinolamine dehydratase (104 aa).

At Ala2 the chain carries N-acetylalanine. Residues 61–63 (DHH) and 78–81 (STHE) contribute to the substrate site.

The protein belongs to the pterin-4-alpha-carbinolamine dehydratase family. In terms of assembly, homotetramer and homodimer. Heterotetramer with HNF1A; formed by a dimer of dimers. Interacts with HNF1B (via HNF-p1 domain); the interaction increases HNF1B transactivation activity.

It localises to the cytoplasm. It is found in the nucleus. It carries out the reaction (4aS,6R)-4a-hydroxy-L-erythro-5,6,7,8-tetrahydrobiopterin = (6R)-L-erythro-6,7-dihydrobiopterin + H2O. In terms of biological role, involved in tetrahydrobiopterin biosynthesis. Seems to both prevent the formation of 7-pterins and accelerate the formation of quinonoid-BH2. Coactivator for HNF1A-dependent transcription. Regulates the dimerization of homeodomain protein HNF1A and enhances its transcriptional activity. Also acts as a coactivator for HNF1B-dependent transcription. The polypeptide is Pterin-4-alpha-carbinolamine dehydratase (PCBD1) (Bos taurus (Bovine)).